The following is an 860-amino-acid chain: Protein translocase subunit SecA (860 aa).

ATP is bound by residues Q87, 105 to 109 (GEGKT), and D514. Residues C846, C848, C857, and C858 each contribute to the Zn(2+) site.

Belongs to the SecA family. In terms of assembly, monomer and homodimer. Part of the essential Sec protein translocation apparatus which comprises SecA, SecYEG and auxiliary proteins SecDF. Other proteins may also be involved. Zn(2+) is required as a cofactor.

Its subcellular location is the cell membrane. It localises to the cytoplasm. It carries out the reaction ATP + H2O + cellular proteinSide 1 = ADP + phosphate + cellular proteinSide 2.. Functionally, part of the Sec protein translocase complex. Interacts with the SecYEG preprotein conducting channel. Has a central role in coupling the hydrolysis of ATP to the transfer of proteins into and across the cell membrane, serving as an ATP-driven molecular motor driving the stepwise translocation of polypeptide chains across the membrane. The sequence is that of Protein translocase subunit SecA from Endomicrobium trichonymphae.